We begin with the raw amino-acid sequence, 229 residues long: Large ribosomal subunit protein uL1 (229 aa).

It belongs to the universal ribosomal protein uL1 family. As to quaternary structure, part of the 50S ribosomal subunit.

Binds directly to 23S rRNA. The L1 stalk is quite mobile in the ribosome, and is involved in E site tRNA release. In terms of biological role, protein L1 is also a translational repressor protein, it controls the translation of the L11 operon by binding to its mRNA. The sequence is that of Large ribosomal subunit protein uL1 from Streptococcus thermophilus (strain CNRZ 1066).